A 233-amino-acid polypeptide reads, in one-letter code: Purine nucleoside phosphorylase DeoD-type (233 aa).

H4 is a binding site for a purine D-ribonucleoside. Phosphate is bound by residues G20, R24, R43, and 87 to 90 (RVGT). Residues 178–180 (EME) and 202–203 (SD) each bind a purine D-ribonucleoside. Residue D203 is the Proton donor of the active site.

Belongs to the PNP/UDP phosphorylase family. As to quaternary structure, homohexamer; trimer of homodimers.

The catalysed reaction is a purine D-ribonucleoside + phosphate = a purine nucleobase + alpha-D-ribose 1-phosphate. It catalyses the reaction a purine 2'-deoxy-D-ribonucleoside + phosphate = a purine nucleobase + 2-deoxy-alpha-D-ribose 1-phosphate. Functionally, catalyzes the reversible phosphorolytic breakdown of the N-glycosidic bond in the beta-(deoxy)ribonucleoside molecules, with the formation of the corresponding free purine bases and pentose-1-phosphate. This Listeria innocua serovar 6a (strain ATCC BAA-680 / CLIP 11262) protein is Purine nucleoside phosphorylase DeoD-type.